The following is an 824-amino-acid chain: Sphingomyelin phosphodiesterase 4 (824 aa).

A helical transmembrane segment spans residues 777–797 (LAFLFIFYILGSLLSLGPLIC).

It depends on Mg(2+) as a cofactor.

It localises to the endoplasmic reticulum membrane. The protein resides in the golgi apparatus membrane. The protein localises to the nucleus envelope. It is found in the cell membrane. Its subcellular location is the sarcolemma. The catalysed reaction is a sphingomyelin + H2O = phosphocholine + an N-acylsphing-4-enine + H(+). Catalyzes the hydrolysis of membrane sphingomyelin to form phosphorylcholine and ceramide. It has a relevant role in the homeostasis of membrane sphingolipids, thereby influencing membrane integrity, and endoplasmic reticulum organization and function. May sensitize cells to DNA damage-induced apoptosis. This Xenopus laevis (African clawed frog) protein is Sphingomyelin phosphodiesterase 4 (smpd4).